The chain runs to 322 residues: Cytochrome c biogenesis protein CcsA (322 aa).

Transmembrane regions (helical) follow at residues 2 to 22 (LFAT…SIVI), 44 to 64 (GMIA…LSSG), 68 to 88 (LSNL…LHTI), 143 to 163 (MLLS…ILII), 226 to 246 (VISL…VWAN), 260 to 274 (TWAF…IYLH), and 289 to 309 (VASI…LLGI).

The protein belongs to the CcmF/CycK/Ccl1/NrfE/CcsA family. In terms of assembly, may interact with Ccs1.

Its subcellular location is the plastid. The protein localises to the chloroplast thylakoid membrane. Required during biogenesis of c-type cytochromes (cytochrome c6 and cytochrome f) at the step of heme attachment. The chain is Cytochrome c biogenesis protein CcsA from Brachypodium distachyon (Purple false brome).